Consider the following 614-residue polypeptide: Membrane protein insertase YidC (614 aa).

A helical transmembrane segment spans residues 6-26 (IVLLIIFSTSLLFLWDAWIKE). Composition is skewed to polar residues over residues 34-48 (PAITQADSSAGSTQS) and 60-70 (ELTSSQASPDT). The tract at residues 34-87 (PAITQADSSAGSTQSRNDDSLPVPGSELTSSQASPDTNGIPASGGNGDSVTPRL) is disordered. A run of 4 helical transmembrane segments spans residues 380-400 (WGVAIILLTMTVKLLFFPLSA), 450-470 (FPILVQIPVFIALYWTILAAV), 484-504 (LSSPDPFYMLPLLMGISMFVQ), and 524-544 (PVAFSAIFFFFPAGLVLYSLV). The tract at residues 562–614 (TAPSKDTPEPPVSKQVNSSENPETTANSPADSPKQPQTPANNPRKMYKRTRKK) is disordered. The span at 575–602 (KQVNSSENPETTANSPADSPKQPQTPAN) shows a compositional bias: polar residues.

This sequence belongs to the OXA1/ALB3/YidC family. Type 1 subfamily. Interacts with the Sec translocase complex via SecD. Specifically interacts with transmembrane segments of nascent integral membrane proteins during membrane integration.

It localises to the cell inner membrane. Required for the insertion and/or proper folding and/or complex formation of integral membrane proteins into the membrane. Involved in integration of membrane proteins that insert both dependently and independently of the Sec translocase complex, as well as at least some lipoproteins. Aids folding of multispanning membrane proteins. In Nitrosomonas europaea (strain ATCC 19718 / CIP 103999 / KCTC 2705 / NBRC 14298), this protein is Membrane protein insertase YidC.